The chain runs to 408 residues: Neutral cholesterol ester hydrolase 1 (408 aa).

Residues 1–4 lie on the Cytoplasmic side of the membrane; that stretch reads MRSS. The chain crosses the membrane as a helical; Signal-anchor for type II membrane protein span at residues 5-25; sequence CVLLAALLALVAYYVYIPLPS. Residues 26–408 are Lumenal-facing; that stretch reads AVSDPWKLML…SYFKWLDQNL (383 aa). The Involved in the stabilization of the negatively charged intermediate by the formation of the oxyanion hole motif lies at 113-115; sequence HGG. The active site involves Ser-191. A glycan (N-linked (GlcNAc...) asparagine) is linked at Asn-270. Asp-348 is a catalytic residue. Asn-367 is a glycosylation site (N-linked (GlcNAc...) asparagine). His-378 is a catalytic residue. Asn-389 carries N-linked (GlcNAc...) asparagine glycosylation.

It belongs to the 'GDXG' lipolytic enzyme family. In terms of processing, N-glycosylated.

The protein resides in the cell membrane. It is found in the microsome. It catalyses the reaction a 1-O-alkyl-2-acetyl-sn-glycerol + H2O = a 1-O-alkyl-sn-glycerol + acetate + H(+). The catalysed reaction is 1-O-hexadecyl-2-acetyl-sn-glycerol + H2O = 1-O-hexadecyl-sn-glycerol + acetate + H(+). The enzyme catalyses a cholesterol ester + H2O = cholesterol + a fatty acid + H(+). It carries out the reaction cholesteryl (9Z-octadecenoate) + H2O = cholesterol + (9Z)-octadecenoate + H(+). In terms of biological role, hydrolyzes 2-acetyl monoalkylglycerol ether (1-O-alkyl-2-acetyl-sn-glycerol), the penultimate precursor of the pathway for de novo synthesis of platelet-activating factor. May be responsible for the hydrolysis of cholesterol esters (such as cholesteryl (9Z-octadecenoate)) in macrophages. Also involved in organ detoxification by hydrolyzing exogenous organophosphorus compounds. The sequence is that of Neutral cholesterol ester hydrolase 1 (Nceh1) from Rattus norvegicus (Rat).